The sequence spans 705 residues: MSRDLQNHLLFETATEVANRVGGIYSVLKSKAPITVAQYKDHYHLIGPLNKATYQNEVDILDWKKPEAFSDEMRPVQHALQTMESRGVHFVYGRWLIEGAPKVILFDLDSVRGYSNEWKGDLWSLVGIPSPENDFETNDAILLGYTVAWFLGEVAHLDSQHAIVAHFHEWLAGVALPLCRKRRIDVVTIFTTHATLLGRYLCASGSFDFYNCLESVDVDHEAGRFGIYHRYCIERAAAHSADVFTTVSQITAFEAEHLLKRKPDGILPNGLNVIKFQAFHEFQNLHALKKEKINDFVRGHFHGCFDFDLDNTLYFFIAGRYEYKNKGADMFIEALARLNYRLKVSGSKKTVVAFIVMPAKNNSFTVEALKGQAEVRALENTVHEVTTSIGKRIFDHAIRYPHNGLTTELPTDLGELLKSSDKVMLKRRILALRRPEGQLPPIVTHNMVDDANDLILNKIRQVQLFNSPSDRVKMIFHPEFLNANNPILGLDYDEFVRGCHLGVFPSYYEPWGYTPAECTVMGVPSITTNVSGFGAYMEDLIETNQAKDYGIYIVDRRFKAPDESVEQLVDYMEEFVKKTRRQRINQRNRTERLSDLLDWKRMGLEYVKARQLALRRGYPDQFRELVGEELNDSNMDALAGGKKLKVARPLSVPGSPRDLRSNSTVYMTPGDLGTLQEVNNADDYFSLGVNPAADDDDDGPYADDS.

R20 lines the UDP pocket. S159 carries the phosphoserine modification. UDP-alpha-D-glucose-binding residues include H193 and R199. The alpha-D-glucose 6-phosphate site is built by H280, E281, Q283, H286, and K290. Position 320 (R320) interacts with UDP. R320 is a UDP-alpha-D-glucose binding site. A phosphoserine mark is found at S363 and S467. H500 contacts alpha-D-glucose 6-phosphate. E509, W511, and G512 together coordinate UDP-alpha-D-glucose. T514 contacts UDP. Residues R583 and R587 each contribute to the alpha-D-glucose 6-phosphate site. S651 carries the phosphoserine modification. S655 bears the Phosphoserine; by PHO85 mark. Phosphoserine; by PKA occurs at positions 661 and 663. Phosphothreonine; by PHO85 is present on T668. Positions 686–705 (SLGVNPAADDDDDGPYADDS) are disordered. The segment covering 693–705 (ADDDDDGPYADDS) has biased composition (acidic residues).

It belongs to the glycosyltransferase 3 family. As to quaternary structure, interacts with PCL10. In terms of processing, phosphorylated by the cyclin-CDK PCL10-PHO85. Phosphorylation causes inactivation of enzyme.

The protein resides in the cytoplasm. Its subcellular location is the cytosol. The catalysed reaction is [(1-&gt;4)-alpha-D-glucosyl](n) + UDP-alpha-D-glucose = [(1-&gt;4)-alpha-D-glucosyl](n+1) + UDP + H(+). The protein operates within glycan biosynthesis; glycogen biosynthesis. Its activity is regulated as follows. Allosteric activation by glucose-6-phosphate, and phosphorylation by a cAMP-dependent kinase. In terms of biological role, glycogen synthase participates in the glycogen biosynthetic process along with glycogenin and glycogen branching enzyme. Extends the primer composed of a few glucose units formed by glycogenin by adding new glucose units to it. In this context, glycogen synthase transfers the glycosyl residue from UDP-Glc to the non-reducing end of alpha-1,4-glucan. This is Glycogen [starch] synthase isoform 2 (GSY2) from Saccharomyces cerevisiae (strain ATCC 204508 / S288c) (Baker's yeast).